A 95-amino-acid chain; its full sequence is Aspartyl/glutamyl-tRNA(Asn/Gln) amidotransferase subunit C (95 aa).

Residues 74–95 (GQALEPAPDADNEHFLVPQVVE) form a disordered region.

Belongs to the GatC family. As to quaternary structure, heterotrimer of A, B and C subunits.

The catalysed reaction is L-glutamyl-tRNA(Gln) + L-glutamine + ATP + H2O = L-glutaminyl-tRNA(Gln) + L-glutamate + ADP + phosphate + H(+). It carries out the reaction L-aspartyl-tRNA(Asn) + L-glutamine + ATP + H2O = L-asparaginyl-tRNA(Asn) + L-glutamate + ADP + phosphate + 2 H(+). Allows the formation of correctly charged Asn-tRNA(Asn) or Gln-tRNA(Gln) through the transamidation of misacylated Asp-tRNA(Asn) or Glu-tRNA(Gln) in organisms which lack either or both of asparaginyl-tRNA or glutaminyl-tRNA synthetases. The reaction takes place in the presence of glutamine and ATP through an activated phospho-Asp-tRNA(Asn) or phospho-Glu-tRNA(Gln). The polypeptide is Aspartyl/glutamyl-tRNA(Asn/Gln) amidotransferase subunit C (Salinibacter ruber (strain DSM 13855 / M31)).